A 407-amino-acid polypeptide reads, in one-letter code: Indoleamine 2,3-dioxygenase 1 (407 aa).

His-350 lines the heme b pocket. The interval 362 to 388 (SKQKPMGGHKSEEPSNTENRGTGGTDV) is disordered.

This sequence belongs to the indoleamine 2,3-dioxygenase family. In terms of assembly, monomer. Heme b serves as cofactor.

The protein resides in the cytoplasm. It localises to the cytosol. It carries out the reaction D-tryptophan + O2 = N-formyl-D-kynurenine. The enzyme catalyses L-tryptophan + O2 = N-formyl-L-kynurenine. With respect to regulation, activity is inhibited by and MTH-trp (methylthiohydantoin-DL-tryptophan), modestly inhibited by L-1MT (1-methyl-L-tryptophan) but not D-1MT (1-methyl-D-tryptophan). In terms of biological role, catalyzes the first and rate limiting step of the catabolism of the essential amino acid tryptophan along the kynurenine pathway. Involved in the peripheral immune tolerance, contributing to maintain homeostasis by preventing autoimmunity or immunopathology that would result from uncontrolled and overreacting immune responses. Tryptophan shortage inhibits T lymphocytes division and accumulation of tryptophan catabolites induces T-cell apoptosis and differentiation of regulatory T-cells. Acts as a suppressor of anti-tumor immunity. Limits the growth of intracellular pathogens by depriving tryptophan. Protects the fetus from maternal immune rejection. The chain is Indoleamine 2,3-dioxygenase 1 from Rattus norvegicus (Rat).